Consider the following 399-residue polypeptide: Alpha-tubulin N-acetyltransferase (399 aa).

Residues 1–178 (MEFNFIINKL…NNFVVFDQYF (178 aa)) form the N-acetyltransferase domain. Acetyl-CoA-binding positions include 112–125 (FYVHESCQRQGYGK) and 148–157 (SPKLIAFLKK). Residues 183–193 (SSQNKQNQNTR) show a composition bias toward polar residues. Residues 183-223 (SSQNKQNQNTRSYSQPYSDYSSQIPTNYPQQQQQQSNSKSY) form a disordered region. The segment covering 194–223 (SYSQPYSDYSSQIPTNYPQQQQQQSNSKSY) has biased composition (low complexity).

This sequence belongs to the acetyltransferase ATAT1 family.

The catalysed reaction is L-lysyl-[alpha-tubulin] + acetyl-CoA = N(6)-acetyl-L-lysyl-[alpha-tubulin] + CoA + H(+). Functionally, specifically acetylates 'Lys-40' in alpha-tubulin on the lumenal side of microtubules. Promotes microtubule destabilization and accelerates microtubule dynamics; this activity may be independent of acetylation activity. Acetylates alpha-tubulin with a slow enzymatic rate, due to a catalytic site that is not optimized for acetyl transfer. Enters the microtubule through each end and diffuses quickly throughout the lumen of microtubules. Acetylates only long/old microtubules because of its slow acetylation rate since it does not have time to act on dynamically unstable microtubules before the enzyme is released. This Tetrahymena thermophila (strain SB210) protein is Alpha-tubulin N-acetyltransferase.